Here is a 446-residue protein sequence, read N- to C-terminus: Probable D-serine dehydratase (446 aa).

N6-(pyridoxal phosphate)lysine is present on Lys-113.

It belongs to the serine/threonine dehydratase family. DsdA subfamily. Pyridoxal 5'-phosphate is required as a cofactor.

The enzyme catalyses D-serine = pyruvate + NH4(+). This is Probable D-serine dehydratase from Burkholderia lata (strain ATCC 17760 / DSM 23089 / LMG 22485 / NCIMB 9086 / R18194 / 383).